A 412-amino-acid polypeptide reads, in one-letter code: Tyrosine--tRNA ligase (412 aa).

Residues 48-57 (PSRPDLHLGH) carry the 'HIGH' region motif. The 'KMSKS' region signature appears at 232–236 (KMSKS). Lys235 is an ATP binding site. An S4 RNA-binding domain is found at 342–405 (VGLLNLMRHA…GKRRFARIRP (64 aa)).

It belongs to the class-I aminoacyl-tRNA synthetase family. TyrS type 2 subfamily. Homodimer.

The protein resides in the cytoplasm. The catalysed reaction is tRNA(Tyr) + L-tyrosine + ATP = L-tyrosyl-tRNA(Tyr) + AMP + diphosphate + H(+). Its function is as follows. Catalyzes the attachment of tyrosine to tRNA(Tyr) in a two-step reaction: tyrosine is first activated by ATP to form Tyr-AMP and then transferred to the acceptor end of tRNA(Tyr). In Salinibacter ruber (strain DSM 13855 / M31), this protein is Tyrosine--tRNA ligase.